We begin with the raw amino-acid sequence, 404 residues long: Glycerol-1-phosphate dehydrogenase [NAD(P)+] (404 aa).

NAD(+)-binding positions include Asp-56, 118–122, and 140–143; these read GTIHD and TAPS. Position 145 (Asp-145) interacts with substrate. Ser-149 serves as a coordination point for NAD(+). Asp-192 provides a ligand contact to substrate. Residues Asp-192 and His-272 each contribute to the Ni(2+) site. His-276 serves as a coordination point for substrate. A Ni(2+)-binding site is contributed by His-292.

This sequence belongs to the glycerol-1-phosphate dehydrogenase family. In terms of assembly, homodimer. It depends on Ni(2+) as a cofactor.

Its subcellular location is the cytoplasm. It carries out the reaction sn-glycerol 1-phosphate + NAD(+) = dihydroxyacetone phosphate + NADH + H(+). It catalyses the reaction sn-glycerol 1-phosphate + NADP(+) = dihydroxyacetone phosphate + NADPH + H(+). Its function is as follows. Catalyzes the NAD(P)H-dependent reduction of dihydroxyacetonephosphate (DHAP or glycerone phosphate) to glycerol 1-phosphate (G1P). The G1P thus generated is probably used for the synthesis of phosphoglycerolipids in Gram-positive bacterial species. The protein is Glycerol-1-phosphate dehydrogenase [NAD(P)+] of Geobacillus stearothermophilus (Bacillus stearothermophilus).